The following is an 88-amino-acid chain: Mitochondrial import inner membrane translocase subunit Tim10 (88 aa).

A Twin CX3C motif motif is present at residues 25 to 49; the sequence is CSAKCISKYNEGDLNVGESVCAERC. 2 disulfide bridges follow: Cys25–Cys49 and Cys29–Cys45. Residues 63–88 are disordered; sequence KMSGTQPGQEVPQEAPAAAPEKKGWF. The segment covering 68 to 81 has biased composition (low complexity); that stretch reads QPGQEVPQEAPAAA.

It belongs to the small Tim family. In terms of assembly, heterohexamer; composed of 3 copies of timm9 and 3 copies of timm10, named soluble 70 kDa complex. Associates directly with the TIM22 complex, whose core is composed of timm22. Interacts with the transmembrane regions of multi-pass transmembrane proteins in transit.

The protein localises to the mitochondrion inner membrane. Functionally, component of the TIM22 complex, a complex that mediates the import and insertion of multi-pass transmembrane proteins into the mitochondrial inner membrane. The TIM22 complex forms a twin-pore translocase that uses the membrane potential as external driving force. The chain is Mitochondrial import inner membrane translocase subunit Tim10 (timm10) from Dictyostelium discoideum (Social amoeba).